The primary structure comprises 281 residues: Auxin-responsive protein IAA10 (281 aa).

2 disordered regions span residues M1–W115 and A130–E157. The segment covering G7 to E17 has biased composition (low complexity). A compositionally biased stretch (acidic residues) spans A18 to E35. Residues L36–L40 carry the EAR-like (transcriptional repression) motif. 2 stretches are compositionally biased toward low complexity: residues L36–Q49 and P63–A84. The segment covering N133–E157 has biased composition (basic and acidic residues). A PB1 domain is found at A163–D259.

It belongs to the Aux/IAA family. Homodimers and heterodimers. In terms of tissue distribution, highly expressed in flowers. Expressed in shoots.

It localises to the nucleus. Its function is as follows. Aux/IAA proteins are short-lived transcriptional factors that function as repressors of early auxin response genes at low auxin concentrations. The protein is Auxin-responsive protein IAA10 (IAA10) of Oryza sativa subsp. indica (Rice).